The sequence spans 84 residues: Small ribosomal subunit protein bS16 (84 aa).

The protein belongs to the bacterial ribosomal protein bS16 family.

In Burkholderia multivorans (strain ATCC 17616 / 249), this protein is Small ribosomal subunit protein bS16.